The following is a 268-amino-acid chain: Putative sgc region protein SgcQ (268 aa).

The protein belongs to the BtpA family.

In Escherichia coli (strain K12), this protein is Putative sgc region protein SgcQ (sgcQ).